The primary structure comprises 234 residues: Purine nucleoside phosphorylase DeoD-type (234 aa).

An a purine D-ribonucleoside-binding site is contributed by histidine 4. Residues glycine 20, arginine 24, arginine 43, and 87-90 (RIGS) contribute to the phosphate site. A purine D-ribonucleoside contacts are provided by residues glutamate 162, 179-181 (EME), and 203-204 (SD). Aspartate 204 functions as the Proton donor in the catalytic mechanism.

It belongs to the PNP/UDP phosphorylase family. As to quaternary structure, homohexamer; trimer of homodimers.

The enzyme catalyses a purine D-ribonucleoside + phosphate = a purine nucleobase + alpha-D-ribose 1-phosphate. It catalyses the reaction a purine 2'-deoxy-D-ribonucleoside + phosphate = a purine nucleobase + 2-deoxy-alpha-D-ribose 1-phosphate. In terms of biological role, catalyzes the reversible phosphorolytic breakdown of the N-glycosidic bond in the beta-(deoxy)ribonucleoside molecules, with the formation of the corresponding free purine bases and pentose-1-phosphate. The chain is Purine nucleoside phosphorylase DeoD-type from Roseobacter denitrificans (strain ATCC 33942 / OCh 114) (Erythrobacter sp. (strain OCh 114)).